A 556-amino-acid chain; its full sequence is 2-succinyl-5-enolpyruvyl-6-hydroxy-3-cyclohexene-1-carboxylate synthase (556 aa).

This sequence belongs to the TPP enzyme family. MenD subfamily. Homodimer. Requires Mg(2+) as cofactor. Mn(2+) is required as a cofactor. Thiamine diphosphate serves as cofactor.

It carries out the reaction isochorismate + 2-oxoglutarate + H(+) = 5-enolpyruvoyl-6-hydroxy-2-succinyl-cyclohex-3-ene-1-carboxylate + CO2. The protein operates within quinol/quinone metabolism; 1,4-dihydroxy-2-naphthoate biosynthesis; 1,4-dihydroxy-2-naphthoate from chorismate: step 2/7. Its pathway is quinol/quinone metabolism; menaquinone biosynthesis. Catalyzes the thiamine diphosphate-dependent decarboxylation of 2-oxoglutarate and the subsequent addition of the resulting succinic semialdehyde-thiamine pyrophosphate anion to isochorismate to yield 2-succinyl-5-enolpyruvyl-6-hydroxy-3-cyclohexene-1-carboxylate (SEPHCHC). This is 2-succinyl-5-enolpyruvyl-6-hydroxy-3-cyclohexene-1-carboxylate synthase from Salmonella paratyphi A (strain AKU_12601).